The following is a 529-amino-acid chain: UDP-glucuronosyltransferase 2B33 (529 aa).

The signal sequence occupies residues 1–24 (MSVKWTSIILLIQLSFYFSSGSCG). Asn-67 and Asn-68 each carry an N-linked (GlcNAc...) asparagine glycan. Residues 494-514 (IGFLLACVATVIFIIMKCCLF) traverse the membrane as a helical segment.

The protein belongs to the UDP-glycosyltransferase family.

It localises to the microsome membrane. It is found in the endoplasmic reticulum membrane. The catalysed reaction is glucuronate acceptor + UDP-alpha-D-glucuronate = acceptor beta-D-glucuronoside + UDP + H(+). UDPGTs are of major importance in the conjugation and subsequent elimination of potentially toxic xenobiotics and endogenous compounds. This isozyme has glucuronidating capacity on estriol and does not catalyze the glucuronidation of beta-estradiol. Capable of conjugating 4-hydroxyestrone, androsterone, diclofenac, and hyodeoxycholic acid. The polypeptide is UDP-glucuronosyltransferase 2B33 (UGT2B33) (Macaca mulatta (Rhesus macaque)).